Reading from the N-terminus, the 187-residue chain is Crossover junction endodeoxyribonuclease RuvC (187 aa).

Catalysis depends on residues Asp-7, Glu-67, and Asp-140. Positions 7, 67, and 140 each coordinate Mg(2+).

The protein belongs to the RuvC family. In terms of assembly, homodimer which binds Holliday junction (HJ) DNA. The HJ becomes 2-fold symmetrical on binding to RuvC with unstacked arms; it has a different conformation from HJ DNA in complex with RuvA. In the full resolvosome a probable DNA-RuvA(4)-RuvB(12)-RuvC(2) complex forms which resolves the HJ. It depends on Mg(2+) as a cofactor.

It is found in the cytoplasm. It catalyses the reaction Endonucleolytic cleavage at a junction such as a reciprocal single-stranded crossover between two homologous DNA duplexes (Holliday junction).. Functionally, the RuvA-RuvB-RuvC complex processes Holliday junction (HJ) DNA during genetic recombination and DNA repair. Endonuclease that resolves HJ intermediates. Cleaves cruciform DNA by making single-stranded nicks across the HJ at symmetrical positions within the homologous arms, yielding a 5'-phosphate and a 3'-hydroxyl group; requires a central core of homology in the junction. The consensus cleavage sequence is 5'-(A/T)TT(C/G)-3'. Cleavage occurs on the 3'-side of the TT dinucleotide at the point of strand exchange. HJ branch migration catalyzed by RuvA-RuvB allows RuvC to scan DNA until it finds its consensus sequence, where it cleaves and resolves the cruciform DNA. This Prosthecochloris aestuarii (strain DSM 271 / SK 413) protein is Crossover junction endodeoxyribonuclease RuvC.